The following is a 278-amino-acid chain: Tumor necrosis factor receptor superfamily member 5 (278 aa).

Residues 1-20 (MVRLPLKCLLWGCFLTAVHP) form the signal peptide. Topologically, residues 21-194 (EPPTSCKENQ…VCGFQSRMRA (174 aa)) are extracellular. 4 TNFR-Cys repeats span residues 25 to 60 (SCKE…TECL), 61 to 103 (PCSS…DTTC), 104 to 144 (VCSE…TICE), and 145 to 187 (PCPV…VVCG). Disulfide bonds link C26-C37, C38-C51, C41-C59, C62-C77, C83-C103, C105-C119, C111-C116, and C125-C143. N153 and N180 each carry an N-linked (GlcNAc...) asparagine glycan. The helical transmembrane segment at 195-215 (LVVIPITLGILFAVLLVFLCI) threads the bilayer. Residues 216–278 (RKVTKEQETK…ESRISVQERE (63 aa)) lie on the Cytoplasmic side of the membrane.

Monomer and homodimer. Interacts with TRAF1, TRAF2, TRAF3, TRAF5 and TRAF6. Interacts with TRAF6 and MAP3K8; the interaction is required for ERK activation.

Its subcellular location is the membrane. Functionally, receptor for TNFSF5/CD40LG. Transduces TRAF6- and MAP3K8-mediated signals that activate ERK in macrophages and B cells, leading to induction of immunoglobulin secretion. This Sus scrofa (Pig) protein is Tumor necrosis factor receptor superfamily member 5 (CD40).